Consider the following 483-residue polypeptide: Aspartyl/glutamyl-tRNA(Asn/Gln) amidotransferase subunit B (483 aa).

It belongs to the GatB/GatE family. GatB subfamily. In terms of assembly, heterotrimer of A, B and C subunits.

The catalysed reaction is L-glutamyl-tRNA(Gln) + L-glutamine + ATP + H2O = L-glutaminyl-tRNA(Gln) + L-glutamate + ADP + phosphate + H(+). The enzyme catalyses L-aspartyl-tRNA(Asn) + L-glutamine + ATP + H2O = L-asparaginyl-tRNA(Asn) + L-glutamate + ADP + phosphate + 2 H(+). Functionally, allows the formation of correctly charged Asn-tRNA(Asn) or Gln-tRNA(Gln) through the transamidation of misacylated Asp-tRNA(Asn) or Glu-tRNA(Gln) in organisms which lack either or both of asparaginyl-tRNA or glutaminyl-tRNA synthetases. The reaction takes place in the presence of glutamine and ATP through an activated phospho-Asp-tRNA(Asn) or phospho-Glu-tRNA(Gln). This is Aspartyl/glutamyl-tRNA(Asn/Gln) amidotransferase subunit B from Rickettsia typhi (strain ATCC VR-144 / Wilmington).